The chain runs to 178 residues: Cytidylate kinase 2 (178 aa).

An ATP-binding site is contributed by 7–15 (GKSGCGNTT).

Belongs to the cytidylate kinase family. Type 2 subfamily.

It is found in the cytoplasm. The enzyme catalyses CMP + ATP = CDP + ADP. The catalysed reaction is dCMP + ATP = dCDP + ADP. The sequence is that of Cytidylate kinase 2 from Borrelia garinii subsp. bavariensis (strain ATCC BAA-2496 / DSM 23469 / PBi) (Borreliella bavariensis).